Consider the following 127-residue polypeptide: Mediator of RNA polymerase II transcription subunit 9 (127 aa).

A coiled-coil region spans residues 95-119 (QKEQEIEAKKRVHRQLRQRVEEIAG).

Belongs to the Mediator complex subunit 9 family. In terms of assembly, component of the Mediator complex.

It is found in the nucleus. In terms of biological role, component of the Mediator complex, a coactivator involved in the regulated transcription of nearly all RNA polymerase II-dependent genes. Mediator functions as a bridge to convey information from gene-specific regulatory proteins to the basal RNA polymerase II transcription machinery. Mediator is recruited to promoters by direct interactions with regulatory proteins and serves as a scaffold for the assembly of a functional preinitiation complex with RNA polymerase II and the general transcription factors. In Eremothecium gossypii (strain ATCC 10895 / CBS 109.51 / FGSC 9923 / NRRL Y-1056) (Yeast), this protein is Mediator of RNA polymerase II transcription subunit 9 (CSE2).